The primary structure comprises 3421 residues: MWTILALLTATLLFEGAFSVDTVVRKNVDSLSSDEVLALEKALDDLQQDDSNQGYQAIAGYHGVPTMCVDKHEKNVACCLHGMPSFPLWHRLYVVQLERALIRKKATISIPYWDWTSELTHLPELVSHPLFVGTEGGKAHDNSWYRADITFLNKKTSRAVDDRLFEKVQPGHHTRLMEGILDALEQDEFCKFEIQFELAHNAIHYLVGGRHTYSMSHLEYTSYDPLFFLHHSNTDRIFAIWQRLQQLRGKDPNSADCAHNLIHTPMEPFDRDTNPLDLTREHAKPADSFDYGRLGYQYDDLSLNGMSPEELNVYLGERAAKERTFASFILSGFGGSANVVVYVCRPAHDEISDDQCIKAGDFFLLGGPTEMKWGFYRAYHFDVTDSVASIDDDGHGHYYVKSELFSVNGSALSNDILRQPTLVHRPAKGHFDKPPVPVAQANLAVRKNINDLTAEETYSLRKAMERFQNDKSVDGYQATVEFHALPARCPRPDAKDRFACCVHGMATFPHWHRLFVTQVEDALLRRGSTIGLPNWDWTMPMDHLPELATSETYLDPVTGETKNNPFHHAQVAFENGVTSRNPDAKLFMKPTYGDHTYLFDSMIYAFEQEDFCDFEVQYELTHNAIHAWVGGSEKYSMSSLHYTAFDPIFYLHHSNVDRLWAIWQALQIRRGKSYKAHCASSQEREPLKPFAFSSPLNNNEKTYHNSVPTNVYDYVGVLHYRYDDLQFGGMTMSELEEYIHKQTQHDRTFAGFFLSYIGTSASVDIFINREGHDKYKVGSFVVLGGSKEMKWGFDRMYKYEITEALKTLNVAVDDGFSITVEITDVDGSPPSADLIPPPAIIFERADAKDFGHSRKIRKAVDSLTVEEQTSLRRAMADLQDDKTSGGFQQIAAFHGEPKWCPSPEAEKKFACCVHGMAVFPHWHRLLTVQGENALRKHGFTGGLPYWDWTRSMSALPHFVADPTYNDAISSQEEDNPWHHGHIDSVGHDTTRDVRDDLYQSPGFGHYTDIAKQVLLAFEQDDFCDFEVQFEIAHNFIHALVGGNEPYSMSSLRYTTYDPIFFLHRSNTDRLWAIWQALQKYRGKPYNTANCAIASMRKPLQPFGLDSVINPDDETREHSVPFRVFDYKNNFDYEYESLAFNGLSIAQLDRELQRRKSHDRVFAGFLLHEIGQSALVKFYVCKHNVSDCDHYAGEFYILGDEAEMPWRYDRVYKYEITQQLHDLDLHVGDNFFLKYEAFDLNGGSLGGSIFSQPSVIFEPAAGSHQADEYREAVTSASHIRKNIRDLSEGEIESIRSAFLQIQKEGIYENIAKFHGKPGLCEHDGHPVACCVHGMPTFPHWHRLYVLQVENALLERGSAVAVPYWDWTEKADSLPSLINDATYFNSRSQTFDPNPFFRGHIAFENAVTSRDPQPELWDNKDFYENVMLALEQDNFCDFEIQLELIHNALHSRLGGRAKYSLSSLDYTAFDPVFFLHHANVDRIWAIWQDLQRYRKKPYNEADCAVNEMRKPLQPFNNPELNSDSMTLKHNLPQDSFDYQNRFRYQYDNLQFNHFSIQKLDQTIQARKQHDRVFAGFILHNIGTSAVVDIYICVEQGGEQNCKTKAGSFTILGGETEMPFHFDRLYKFDITSALHKLGVPLDGHGFDIKVDVRAVNGSHLDQHILNEPSLLFVPGERKNIYYDGLSQHNLVRKEVSSLTTLEKHFLRKALKNMQADDSPDGYQAIASFHALPPLCPSPSAAHRHACCLHGMATFPQWHRLYTVQFEDSLKRHGSIVGLPYWDWLKPQSALPDLVTQETYEHLFSHKTFPNPFLKANIEFEGEGVTTERDVDAEHLFAKGNLVYNNWFCNQALYALEQENYCDFEIQFEILHNGIHSWVGGSKTHSIGHLHYASYDPLFYIHHSQTDRIWAIWQALQEHRGLSGKEAHCALEQMKDPLKPFSFGSPYNLNKRTQEFSKPEDTFDYHRFGYEYDSLEFVGMSVSSLHNYIKQQQEADRVFAGFLLKGFGQSASVSFDICRPDQSCQEAGYFSVLGGSSEMPWQFDRLYKYDITKTLKDMKLRYDDTFTIKVHIKDIAGAELDSDLIPTPSVLLEEGKHGINVRHVGRNRIRMELSELTERDLASLKSAMRSLQADDGVNGYQAIASFHGLPASCHDDEGHEIACCIHGMPVFPHWHRLYTLQMDMALLSHGSAVAIPYWDWTKPISKLPDLFTSPEYYDPWRDAVVNNPFAKGYIKSEDAYTVRDPQDILYHLQDETGTSVLLDQTLLALEQTDFCDFEVQFEVVHNAIHYLVGGRQVYALSSQHYASYDPAFFIHHSFVDKIWAVWQALQKKRKRPYHKADCALNMMTKPMRPFAHDFNHNGFTKMHAVPNTLFDFQDLFYTYDNLEIAGMNVNQLEAEINRRKSQTRVFAGFLLHGIGRSADVRFWICKTADDCHASGMIFILGGSKEMHWAYDRNFKYDITQALKAQSIHPEDVFDTDAPFFIKVEVHGVNKTALPSSAIPAPTIIYSAGEGHTDDHGSDHIAGSGVRKDVTSLTASEIENLRHALQSVMDDDGPNGFQAIAAYHGSPPMCHMXDGRDVACCTHGMASFPHWHRLFVKQMEDALAAHGAHIGIPYWDWTSAFSHLPALVTDHEHNPFHHGHIAHRNVDTSRSPRDMLFNDPEHGSESFFYRQVLLALEQTDFCQFEVQFEITHNAIHSWTGGHTPYGMSSLEYTAYDPLFYLHHSNTDRIWAIWQALQKYRGFQYNAAHCDIQVLKQPLKPFSESRNPNPVTRANSRAVDSFDYERLNYQYDTLTFHGHSISELDAMLQERKKEERTFAAFLLHGFGASADVSFDVCTPDGHCAFAGTFAVLGGELEMPWSFERLFRYDITKVLKQMNLHYDSEFHFELKIVGTDGTELPSDRIKSPTIEHHGGDHHGGDTSGHDHSERHDGFFRKEVGSLSLDEANDLKNALYKLQNDQGPNGYESIAGYHGYPFLCPEHGEDQYACCVHGMPVFPHWHRLHTIQFERALKEHGSHLGIPYWDWTKSMIALPAFFADSSNSNPFYKYHIMKAGHDTARSPSDLLFNQPQLHGYDYLYYLALSTLEEDNYCDFEVHYEILHNAVHLWLGGTETYSMSSLAFSAYDPVFMILHSGLDRLWIIWQELQKLRKKPYNAAKCAGHMMDEPLHPFNYESANHDSFTRANAKPSTVFDSHKFNYHYDNPDVRGNSIQEISAIIHDLRNQPRVFAGFVLSGIYTSANVKIYLVREGHDDENVGSFVVLGGPKEMPWAYERIFKYDITEVANRLNMHHDDTFNFRLEVQSYTGEMVTHHLPEPLIIYRPAKQEYDVLVIPLGSGHKLPPKVIVKRGTRIMFHPVDDTVNRPVVDLGSHTALYNCVVPPFTYNGYELDHAYSLRDGHYYIAGPTKDLCTSGNVRIHIHIEDE.

The first 19 residues, 1–19, serve as a signal peptide directing secretion; it reads MWTILALLTATLLFEGAFS. Positions 20–442 are functional unit a (wall); sequence VDTVVRKNVD…KPPVPVAQAN (423 aa). Residue histidine 62 participates in Cu cation binding. Cysteine 68 and cysteine 78 are disulfide-bonded. Residues 79 to 81 constitute a cross-link (2'-(S-cysteinyl)-histidine (Cys-His)); sequence CLH. Cu cation contacts are provided by histidine 81, histidine 90, histidine 200, histidine 204, and histidine 231. 2 disulfide bridges follow: cysteine 190/cysteine 257 and cysteine 344/cysteine 356. The N-linked (GlcNAc...) asparagine glycan is linked to asparagine 408. A functional unit b (wall) region spans residues 443-853; sequence LAVRKNINDL…RADAKDFGHS (411 aa). Histidine 483 serves as a coordination point for Cu cation. Cysteines 489 and 500 form a disulfide. Positions 501–503 form a cross-link, 2'-(S-cysteinyl)-histidine (Cys-His); sequence CVH. Cu cation is bound by residues histidine 503, histidine 512, histidine 622, histidine 626, histidine 653, and histidine 894. A disulfide bond links cysteine 612 and cysteine 678. The stretch at 632 to 673 is one WD 1 repeat; that stretch reads SEKYSMSSLHYTAFDPIFYLHHSNVDRLWAIWQALQIRRGKS. A functional unit c (wall) region spans residues 854 to 1275; the sequence is RKIRKAVDSL…DEYREAVTSA (422 aa). Cysteine 900 and cysteine 911 are oxidised to a cystine. Residues 912–914 constitute a cross-link (2'-(S-cysteinyl)-histidine (Cys-His)); the sequence is CVH. Positions 914, 923, 1033, 1037, and 1063 each coordinate Cu cation. 2 disulfide bridges follow: cysteine 1023–cysteine 1090 and cysteine 1180–cysteine 1187. One copy of the WD 2 repeat lies at 1043–1084; sequence NEPYSMSSLRYTTYDPIFFLHRSNTDRLWAIWQALQKYRGKP. N-linked (GlcNAc...) asparagine glycosylation is present at asparagine 1183. Residues 1276–1685 are functional unit d (wall); it reads SHIRKNIRDL…NIYYDGLSQH (410 aa). Histidine 1313 serves as a coordination point for Cu cation. Cysteine 1319 and cysteine 1328 are disulfide-bonded. Residues 1329–1331 constitute a cross-link (2'-(S-cysteinyl)-histidine (Cys-His)); that stretch reads CVH. Cu cation is bound by residues histidine 1331 and histidine 1340. A WD 3 repeat occupies 1387-1425; that stretch reads QTFDPNPFFRGHIAFENAVTSRDPQPELWDNKDFYENVM. Cystine bridges form between cysteine 1434–cysteine 1501 and cysteine 1590–cysteine 1599. Residues histidine 1444, histidine 1448, and histidine 1475 each coordinate Cu cation. The stretch at 1454–1495 is one WD 4 repeat; that stretch reads RAKYSLSSLDYTAFDPVFFLHHANVDRIWAIWQDLQRYRKKP. An N-linked (GlcNAc...) asparagine glycan is attached at asparagine 1653. A functional unit e (wall) region spans residues 1686–2102; it reads NLVRKEVSSL…HGINVRHVGR (417 aa). A Cu cation-binding site is contributed by histidine 1726. A disulfide bridge links cysteine 1732 with cysteine 1743. Residues 1744-1746 constitute a cross-link (2'-(S-cysteinyl)-histidine (Cys-His)); that stretch reads CLH. Histidine 1746, histidine 1755, histidine 1868, histidine 1872, and histidine 1899 together coordinate Cu cation. 2 disulfides stabilise this stretch: cysteine 1858-cysteine 1925 and cysteine 2014-cysteine 2020. A WD 5 repeat occupies 1878–1919; it reads SKTHSIGHLHYASYDPLFYIHHSQTDRIWAIWQALQEHRGLS. Residues 2103–2522 are functional unit f (wall); sequence NRIRMELSEL…DDHGSDHIAG (420 aa). Residue histidine 2143 coordinates Cu cation. Cysteine 2149 and cysteine 2159 are joined by a disulfide. The 2'-(S-cysteinyl)-histidine (Cys-His) cross-link spans 2160–2162; it reads CIH. Cu cation-binding residues include histidine 2162, histidine 2171, histidine 2281, histidine 2285, and histidine 2312. The WD 6 repeat unit spans residues 2168 to 2204; that stretch reads PHWHRLYTLQMDMALLSHGSAVAIPYWDWTKPISKLP. Cystine bridges form between cysteine 2271-cysteine 2338 and cysteine 2425-cysteine 2431. Residues 2523–2929 are functional unit g (internal arc); the sequence is SGVRKDVTSL…SGHDHSERHD (407 aa). Position 2563 (histidine 2563) interacts with Cu cation. Cysteines 2569 and 2579 form a disulfide. A cross-link (2'-(S-cysteinyl)-histidine (Cys-His)) is located at residues 2580 to 2582; it reads CTH. Histidine 2582, histidine 2591, histidine 2691, histidine 2695, and histidine 2722 together coordinate Cu cation. Intrachain disulfides connect cysteine 2681–cysteine 2748 and cysteine 2835–cysteine 2841. The WD 7 repeat unit spans residues 2700 to 2742; the sequence is GHTPYGMSSLEYTAYDPLFYLHHSNTDRIWAIWQALQKYRGFQ. The segment at 2898 to 2927 is disordered; that stretch reads PSDRIKSPTIEHHGGDHHGGDTSGHDHSER. Positions 2930-3421 are functional unit h (internal slab); sequence GFFRKEVGSL…VRIHIHIEDE (492 aa). Residue histidine 2970 coordinates Cu cation. An intrachain disulfide couples cysteine 2976 to cysteine 2986. Positions 2987–2989 form a cross-link, 2'-(S-cysteinyl)-histidine (Cys-His); that stretch reads CVH. Residues histidine 2989, histidine 2998, histidine 3099, histidine 3103, and histidine 3130 each contribute to the Cu cation site. 2 cysteine pairs are disulfide-bonded: cysteine 3089–cysteine 3156 and cysteine 3374–cysteine 3407. The stretch at 3109 to 3150 is one WD 8 repeat; it reads TETYSMSSLAFSAYDPVFMILHSGLDRLWIIWQELQKLRKKP.

This sequence belongs to the tyrosinase family. Hemocyanin subfamily. Homo-didecamer and homo-multidecamer. Probably N-glycosylated. Asn-2489 is buried deeply in the protein which make it inaccessible for sugar attachment. Hemolymph.

The protein resides in the secreted. Its subcellular location is the extracellular space. Its function is as follows. Hemocyanins are copper-containing oxygen carriers occurring freely dissolved in the hemolymph of many mollusks and arthropods. In Megathura crenulata (Giant keyhole limpet), this protein is Hemocyanin 2.